The sequence spans 470 residues: Trigger factor (470 aa).

One can recognise a PPIase FKBP-type domain in the interval 164 to 243; that stretch reads GDYVVIDMTA…VTAVKVQELP (80 aa). Acidic residues-rich tracts occupy residues 424–438 and 445–470; these read ETDAEDAAEGVESVE and AEDDAEETSDEPAAEDTATEDEAAKA. A disordered region spans residues 424–470; the sequence is ETDAEDAAEGVESVEVDLSAAAEDDAEETSDEPAAEDTATEDEAAKA.

The protein belongs to the FKBP-type PPIase family. Tig subfamily.

It localises to the cytoplasm. It catalyses the reaction [protein]-peptidylproline (omega=180) = [protein]-peptidylproline (omega=0). Involved in protein export. Acts as a chaperone by maintaining the newly synthesized protein in an open conformation. Functions as a peptidyl-prolyl cis-trans isomerase. This is Trigger factor from Beutenbergia cavernae (strain ATCC BAA-8 / DSM 12333 / CCUG 43141 / JCM 11478 / NBRC 16432 / NCIMB 13614 / HKI 0122).